Reading from the N-terminus, the 449-residue chain is Chitobiosyldiphosphodolichol beta-mannosyltransferase (449 aa).

Over 1–7 (MFLEIPR) the chain is Lumenal. Residues 8 to 28 (WLLALIILYLSIPLVVYYVIP) form a helical membrane-spanning segment. The short motif at 21–32 (LVVYYVIPYLFY) is the Dolichol recognition element. The Cytoplasmic segment spans residues 29–104 (YLFYGNKSTK…SNLKRKGGGT (76 aa)). The segment at residues 105 to 125 (SVIFMVKKVLFQVLSIFKLLW) is an intramembrane region (helical). Residues 126–449 (ELRGSDYILV…RTMRDLKLIH (324 aa)) are Cytoplasmic-facing. The tract at residues 435 to 449 (QSNWERTMRDLKLIH) is required for oligomerization.

This sequence belongs to the glycosyltransferase group 1 family. Glycosyltransferase 33 subfamily. In terms of assembly, homodimer. ALG1 forms mannosyltransferases (MT) heteromeric complexes with either ALG2 or ALG11.

Its subcellular location is the endoplasmic reticulum membrane. It carries out the reaction an N,N'-diacetylchitobiosyl-diphospho-di-trans,poly-cis-dolichol + GDP-alpha-D-mannose = a beta-D-Man-(1-&gt;4)-beta-D-GlcNAc-(1-&gt;4)-alpha-D-GlcNAc-diphospho-di-trans,poly-cis-dolichol + GDP + H(+). Its pathway is protein modification; protein glycosylation. In terms of biological role, participates in the formation of the lipid-linked precursor oligosaccharide for N-glycosylation. Involved in assembling the dolichol-pyrophosphate-GlcNAc(2)-Man(5) intermediate on the cytoplasmic surface of the ER. The protein is Chitobiosyldiphosphodolichol beta-mannosyltransferase (ALG1) of Saccharomyces cerevisiae (strain ATCC 204508 / S288c) (Baker's yeast).